Here is a 386-residue protein sequence, read N- to C-terminus: Patatin group M-2 (386 aa).

The N-terminal stretch at 1-23 (MATTKSFLILFFMILATTSSTCA) is a signal peptide. The PNPLA domain occupies 32–229 (LSIDGGGIKG…TVGDPALLSL (198 aa)). The short motif at 36-41 (GGGIKG) is the GXGXXG element. The short motif at 75–79 (GTSTG) is the GXSXG element. The Nucleophile role is filled by S77. N-linked (GlcNAc...) asparagine glycosylation occurs at N115. The active-site Proton acceptor is the D215. The DGA/G motif lies at 215 to 217 (DGG). Positions 321 to 384 (ENALTGTTTE…DRKKLRANKA (64 aa)) form a coiled coil.

This sequence belongs to the patatin family. As to expression, tuber.

The protein localises to the vacuole. Functionally, probable lipolytic acyl hydrolase (LAH), an activity which is thought to be involved in the response of tubers to pathogens. The protein is Patatin group M-2 of Solanum tuberosum (Potato).